The primary structure comprises 152 residues: Endoribonuclease YbeY (152 aa).

Residues His113, His117, and His123 each contribute to the Zn(2+) site.

The protein belongs to the endoribonuclease YbeY family. It depends on Zn(2+) as a cofactor.

It is found in the cytoplasm. In terms of biological role, single strand-specific metallo-endoribonuclease involved in late-stage 70S ribosome quality control and in maturation of the 3' terminus of the 16S rRNA. The polypeptide is Endoribonuclease YbeY (Acidovorax sp. (strain JS42)).